Consider the following 513-residue polypeptide: Acetylcholine receptor subunit delta (513 aa).

The first 18 residues, 1 to 18, serve as a signal peptide directing secretion; sequence MAVLLALFGALVLSGGLC. Residues 19 to 244 lie on the Extracellular side of the membrane; sequence VNQEERLIHH…ITFYLIIKRK (226 aa). 2 N-linked (GlcNAc...) asparagine glycosylation sites follow: asparagine 88 and asparagine 161. A disulfide bridge connects residues cysteine 148 and cysteine 162. 3 helical membrane-spanning segments follow: residues 245–269, 277–295, and 311–332; these read PLFY…VFYL, MTLV…LLVS, and YLLF…VLNF. The Cytoplasmic segment spans residues 333 to 467; it reads HFRTPSTHVM…WNRVARTLDR (135 aa). Position 388 is a phosphotyrosine; by Tyr-kinases (tyrosine 388). The helical transmembrane segment at 468-490 threads the bilayer; the sequence is LCLFLITPMLVVGTLWIFLMGIY.

This sequence belongs to the ligand-gated ion channel (TC 1.A.9) family. Acetylcholine receptor (TC 1.A.9.1) subfamily. As to quaternary structure, pentamer of two alpha chains, and one each of the beta, delta, and gamma chains.

It is found in the postsynaptic cell membrane. The protein localises to the cell membrane. The catalysed reaction is K(+)(in) = K(+)(out). It carries out the reaction Na(+)(in) = Na(+)(out). In terms of biological role, after binding acetylcholine, the AChR responds by an extensive change in conformation that affects all subunits and leads to opening of an ion-conducting channel across the plasma membrane. The protein is Acetylcholine receptor subunit delta (CHRND) of Gallus gallus (Chicken).